The following is a 483-amino-acid chain: Probable cobyric acid synthase (483 aa).

Residues 247–433 (ELHIQIIKLP…LHGIFHNFAF (187 aa)) enclose the GATase cobBQ-type domain. Catalysis depends on Cys-325, which acts as the Nucleophile. His-425 is a catalytic residue.

This sequence belongs to the CobB/CobQ family. CobQ subfamily.

It functions in the pathway cofactor biosynthesis; adenosylcobalamin biosynthesis. Its function is as follows. Catalyzes amidations at positions B, D, E, and G on adenosylcobyrinic A,C-diamide. NH(2) groups are provided by glutamine, and one molecule of ATP is hydrogenolyzed for each amidation. This chain is Probable cobyric acid synthase, found in Thermococcus gammatolerans (strain DSM 15229 / JCM 11827 / EJ3).